The chain runs to 222 residues: U-scoloptoxin(11)-Sm5a (222 aa).

It belongs to the scoloptoxin-11 family. In terms of processing, contains 8 disulfide bonds. Expressed by the venom gland.

The protein localises to the secreted. The chain is U-scoloptoxin(11)-Sm5a from Scolopendra morsitans (Tanzanian blue ringleg centipede).